The primary structure comprises 349 residues: Replication-associated protein (349 aa).

One can recognise a CRESS-DNA virus Rep endonuclease domain in the interval 9-118; it reads RLAARNIFLT…DGDYCESGQY (110 aa). An RCR-1 motif is present at residues 16-19; it reads FLTY. 3 residues coordinate a divalent metal cation: E51, H59, and H61. An RCR-2 motif is present at residues 59–61; the sequence is HLH. The For DNA cleavage activity role is filled by Y105. The short motif at 105–108 is the RCR-3 element; it reads YITK. Residue D109 coordinates a divalent metal cation. The interval 141–151 is binding to RBR1; sequence VEEALAIIRAG. Residues 154-174 form an oligomerization region; the sequence is KTFIVSYHNVRANIERLFTKA. 220 to 227 provides a ligand contact to ATP; that stretch reads GDSRTGKT.

It belongs to the geminiviridae Rep protein family. In terms of assembly, homooligomer. Interacts with the replication enhancer protein (REn). Interacts with host retinoblastoma-related protein 1 (RBR1), and may thereby induce the transcription of host replicative enzymes even if the cell is not dividing anymore. Interacts with host PCNA. Interacts with host SCE1 protein. Mg(2+) serves as cofactor. Mn(2+) is required as a cofactor.

It localises to the host nucleus. Functionally, essential for the replication of viral ssDNA. The closed circular ssDNA genome is first converted to a superhelical dsDNA. Rep binds a specific region at the genome origin of replication. It introduces an endonucleolytic nick within the conserved sequence 5'-TAATATTAC-3' in the intergenic region of the genome present in all geminiviruses, thereby initiating the rolling circle replication (RCR). Following cleavage, binds covalently to the 5'-phosphate of DNA as a tyrosyl ester. The cleavage gives rise to a free 3'-OH that serves as a primer for the cellular DNA polymerase. The polymerase synthesizes the (+) strand DNA by rolling circle mechanism. After one round of replication, a Rep-catalyzed nucleotidyl transfer reaction releases a circular single-stranded virus genome, thereby terminating the replication. Displays origin-specific DNA cleavage, nucleotidyl transferase, ATPase and helicase activities. The sequence is that of Replication-associated protein from Cabbage leaf curl virus (isolate Jamaica) (CaLCuV).